The chain runs to 525 residues: GMP synthase [glutamine-hydrolyzing] (525 aa).

The 199-residue stretch at Arg-9–Leu-207 folds into the Glutamine amidotransferase type-1 domain. Catalysis depends on Cys-86, which acts as the Nucleophile. Residues His-181 and Glu-183 contribute to the active site. Residues Trp-208 to Arg-400 form the GMPS ATP-PPase domain. Ser-235–Ser-241 serves as a coordination point for ATP.

Homodimer.

It catalyses the reaction XMP + L-glutamine + ATP + H2O = GMP + L-glutamate + AMP + diphosphate + 2 H(+). The protein operates within purine metabolism; GMP biosynthesis; GMP from XMP (L-Gln route): step 1/1. Functionally, catalyzes the synthesis of GMP from XMP. The protein is GMP synthase [glutamine-hydrolyzing] of Enterobacter sp. (strain 638).